The following is a 134-amino-acid chain: Holo-[acyl-carrier-protein] synthase (134 aa).

Residues D8 and E59 each contribute to the Mg(2+) site.

This sequence belongs to the P-Pant transferase superfamily. AcpS family. It depends on Mg(2+) as a cofactor.

It localises to the cytoplasm. It catalyses the reaction apo-[ACP] + CoA = holo-[ACP] + adenosine 3',5'-bisphosphate + H(+). Its function is as follows. Transfers the 4'-phosphopantetheine moiety from coenzyme A to a Ser of acyl-carrier-protein. The sequence is that of Holo-[acyl-carrier-protein] synthase from Zymomonas mobilis subsp. mobilis (strain ATCC 31821 / ZM4 / CP4).